A 378-amino-acid polypeptide reads, in one-letter code: Protein-glutamate methylesterase/protein-glutamine glutaminase 2 (378 aa).

The Response regulatory domain maps to 4–121 (KVLVVDDSGF…SRNPEKVKQL (118 aa)). Residue Asp55 is modified to 4-aspartylphosphate. Residues 141–188 (APAPAAAPTPAPIPAAAPSSFGSHSAPARPAPAPAPTRAPAASASSPA) form a disordered region. The span at 145–155 (AAAPTPAPIPA) shows a compositional bias: pro residues. 2 stretches are compositionally biased toward low complexity: residues 156–168 (AAPS…SAPA) and 178–188 (RAPAASASSPA). The region spanning 187-378 (PAPKRKNYKL…IGKHIVEACV (192 aa)) is the CheB-type methylesterase domain. Active-site residues include Ser202, His229, and Asp322.

This sequence belongs to the CheB family. Post-translationally, phosphorylated by CheA. Phosphorylation of the N-terminal regulatory domain activates the methylesterase activity.

It is found in the cytoplasm. It catalyses the reaction [protein]-L-glutamate 5-O-methyl ester + H2O = L-glutamyl-[protein] + methanol + H(+). It carries out the reaction L-glutaminyl-[protein] + H2O = L-glutamyl-[protein] + NH4(+). Its function is as follows. Involved in chemotaxis. Part of a chemotaxis signal transduction system that modulates chemotaxis in response to various stimuli. Catalyzes the demethylation of specific methylglutamate residues introduced into the chemoreceptors (methyl-accepting chemotaxis proteins or MCP) by CheR. Also mediates the irreversible deamidation of specific glutamine residues to glutamic acid. The sequence is that of Protein-glutamate methylesterase/protein-glutamine glutaminase 2 from Pseudomonas fluorescens (strain Pf0-1).